Consider the following 453-residue polypeptide: Nuclear and cytoplasmic polyadenylated RNA-binding protein PUB1 (453 aa).

The disordered stretch occupies residues 1–67; sequence MSENNEEQHQ…PSVVPANAIT (67 aa). Ser-2 bears the N-acetylserine mark. RRM domains are found at residues 75-152 and 162-240; these read RVLY…WAFQ and FNLF…WAAK. The disordered stretch occupies residues 241–262; the sequence is RDNNNNNNYQQRRNYGNNNRGG. A compositionally biased stretch (low complexity) spans 244-262; sequence NNNNNYQQRRNYGNNNRGG. Arg-260 is modified (omega-N-methylarginine). The segment at 260-264 is RNA-binding RGG-box; it reads RGGFR. Residues 341 to 413 enclose the RRM 3 domain; the sequence is TTAYIGNIPH…RNLRTGWGKE (73 aa). Residues 419–453 form a disordered region; it reads PQQQQQGGQPLIMNDQQQPVMSEQQQQQQQQQQQQ. Residues 434-453 are compositionally biased toward low complexity; it reads QQQPVMSEQQQQQQQQQQQQ.

Interacts with NAB2.

The protein resides in the cytoplasm. It is found in the nucleus. It localises to the P-body. Its subcellular location is the stress granule. In terms of biological role, may be associated with hnRNA within the nucleus and remains associated during nucleocytoplasmic mRNA transport, once the proteins are in the cytoplasm, disassembly of PUB1-RNA complexes may occur prior to PAB1 binding and formation of a translationally competent RNP complex. Binds to polyadenylated RNA; prefers to bind poly(rU); binds to T-rich single-stranded DNA. This Saccharomyces cerevisiae (strain ATCC 204508 / S288c) (Baker's yeast) protein is Nuclear and cytoplasmic polyadenylated RNA-binding protein PUB1.